A 584-amino-acid polypeptide reads, in one-letter code: A-type ATP synthase subunit A 2 (584 aa).

An ATP-binding site is contributed by 227-234 (GGFGTGKT).

This sequence belongs to the ATPase alpha/beta chains family. Has multiple subunits with at least A(3), B(3), C, D, E, F, H, I and proteolipid K(x).

The protein resides in the cell membrane. The enzyme catalyses ATP + H2O + 4 H(+)(in) = ADP + phosphate + 5 H(+)(out). Its function is as follows. Component of the A-type ATP synthase that produces ATP from ADP in the presence of a proton gradient across the membrane. The A chain is the catalytic subunit. This chain is A-type ATP synthase subunit A 2, found in Methanospirillum hungatei JF-1 (strain ATCC 27890 / DSM 864 / NBRC 100397 / JF-1).